We begin with the raw amino-acid sequence, 753 residues long: Eukaryotic translation initiation factor 3 subunit B (753 aa).

Positions 42–129 (TMLVVDNIPI…NVLHVNRFGD (88 aa)) constitute an RRM domain. WD repeat units follow at residues 142–185 (DLPS…WWNG), 203–241 (NSKW…GPIG), 321–362 (DTQS…LLDR), 537–580 (LDSK…DERR), and 595–640 (GEHY…LLHE). Residues 723 to 753 (KSKAKIDVKGQEARVEEWVEELIDETEELSM) are a coiled coil.

It belongs to the eIF-3 subunit B family. In terms of assembly, component of the eukaryotic translation initiation factor 3 (eIF-3) complex.

It localises to the cytoplasm. In terms of biological role, RNA-binding component of the eukaryotic translation initiation factor 3 (eIF-3) complex, which is involved in protein synthesis of a specialized repertoire of mRNAs and, together with other initiation factors, stimulates binding of mRNA and methionyl-tRNAi to the 40S ribosome. The eIF-3 complex specifically targets and initiates translation of a subset of mRNAs involved in cell proliferation. The protein is Eukaryotic translation initiation factor 3 subunit B of Cryptococcus neoformans var. neoformans serotype D (strain B-3501A) (Filobasidiella neoformans).